The sequence spans 61 residues: Small ribosomal subunit protein uS14 (61 aa).

Residues C24, C27, C40, and C43 each coordinate Zn(2+).

This sequence belongs to the universal ribosomal protein uS14 family. Zinc-binding uS14 subfamily. In terms of assembly, part of the 30S ribosomal subunit. Contacts proteins S3 and S10. Requires Zn(2+) as cofactor.

Its function is as follows. Binds 16S rRNA, required for the assembly of 30S particles and may also be responsible for determining the conformation of the 16S rRNA at the A site. This is Small ribosomal subunit protein uS14 from Borreliella burgdorferi (strain ATCC 35210 / DSM 4680 / CIP 102532 / B31) (Borrelia burgdorferi).